Reading from the N-terminus, the 225-residue chain is Esterase OVCA2 (225 aa).

Catalysis depends on charge relay system residues S119, D177, and H204.

Belongs to the LovG family. As to expression, strongly expressed in kidney and liver. Moderately expressed in brain, skin and testis. Weakly expressed in heart, lung, small intestine, spleen, stomach and thymus.

The enzyme catalyses a carboxylic ester + H2O = an alcohol + a carboxylate + H(+). In terms of biological role, exhibits ester hydrolase activity with a strong preference for long-chain alkyl ester substrates and high selectivity against a variety of short, branched, and substituted esters. Is able to hydrolyze ester bonds within a wide range of p-nitrophenyl derivatives (C2-C14) in vitro, with a strong preference toward substrates of &gt;8 carbons. The chain is Esterase OVCA2 (Ovca2) from Mus musculus (Mouse).